The following is a 516-amino-acid chain: Bifunctional purine biosynthesis protein PurH (516 aa).

In terms of domain architecture, MGS-like spans 1 to 149 (MSERQPIRRA…KNHANVAVLT (149 aa)).

Belongs to the PurH family.

It carries out the reaction (6R)-10-formyltetrahydrofolate + 5-amino-1-(5-phospho-beta-D-ribosyl)imidazole-4-carboxamide = 5-formamido-1-(5-phospho-D-ribosyl)imidazole-4-carboxamide + (6S)-5,6,7,8-tetrahydrofolate. The catalysed reaction is IMP + H2O = 5-formamido-1-(5-phospho-D-ribosyl)imidazole-4-carboxamide. It participates in purine metabolism; IMP biosynthesis via de novo pathway; 5-formamido-1-(5-phospho-D-ribosyl)imidazole-4-carboxamide from 5-amino-1-(5-phospho-D-ribosyl)imidazole-4-carboxamide (10-formyl THF route): step 1/1. It functions in the pathway purine metabolism; IMP biosynthesis via de novo pathway; IMP from 5-formamido-1-(5-phospho-D-ribosyl)imidazole-4-carboxamide: step 1/1. The chain is Bifunctional purine biosynthesis protein PurH from Cutibacterium acnes (strain DSM 16379 / KPA171202) (Propionibacterium acnes).